The sequence spans 281 residues: Diphthine methyl ester synthase (281 aa).

S-adenosyl-L-methionine is bound by residues leucine 9, aspartate 84, glycine 87, 112–113 (SI), and leucine 163. Serine 171 carries the phosphoserine modification. S-adenosyl-L-methionine contacts are provided by valine 225 and histidine 250.

This sequence belongs to the diphthine synthase family.

It carries out the reaction 2-[(3S)-amino-3-carboxypropyl]-L-histidyl-[translation elongation factor 2] + 4 S-adenosyl-L-methionine = diphthine methyl ester-[translation elongation factor 2] + 4 S-adenosyl-L-homocysteine + 3 H(+). The protein operates within protein modification; peptidyl-diphthamide biosynthesis. S-adenosyl-L-methionine-dependent methyltransferase that catalyzes four methylations of the modified target histidine residue in translation elongation factor 2 (EF-2), to form an intermediate called diphthine methyl ester. The four successive methylation reactions represent the second step of diphthamide biosynthesis. The chain is Diphthine methyl ester synthase (Dph5) from Mus musculus (Mouse).